Here is a 124-residue protein sequence, read N- to C-terminus: Prefoldin subunit beta (124 aa).

This sequence belongs to the prefoldin subunit beta family. As to quaternary structure, heterohexamer of two alpha and four beta subunits.

The protein localises to the cytoplasm. Its function is as follows. Molecular chaperone capable of stabilizing a range of proteins. Seems to fulfill an ATP-independent, HSP70-like function in archaeal de novo protein folding. The polypeptide is Prefoldin subunit beta (pfdB) (Thermoplasma acidophilum (strain ATCC 25905 / DSM 1728 / JCM 9062 / NBRC 15155 / AMRC-C165)).